The primary structure comprises 119 residues: Large ribosomal subunit protein bL20 (119 aa).

Belongs to the bacterial ribosomal protein bL20 family.

In terms of biological role, binds directly to 23S ribosomal RNA and is necessary for the in vitro assembly process of the 50S ribosomal subunit. It is not involved in the protein synthesizing functions of that subunit. This Acinetobacter baylyi (strain ATCC 33305 / BD413 / ADP1) protein is Large ribosomal subunit protein bL20.